Consider the following 266-residue polypeptide: MPPPAPLFLSLASTPPPALMPVHHPRAPQSLTLVPPVASSRKAAAVPACPVASPRHSDYFDPRAPPPPRGDGGYGRPPNGAQDGRVFTSYSIYKGKAALSFDPRPPLFVPLDSGAYKVAKEGFVLLQFAPAVATRQYDWTRKQVFSLSVWEIGTLLTLGPTDSCEFFHDPFKGRSEEGKVRKVLKIEPTPDGNGRFFNLSVQNRLINVDESIYIPITKGEFAVIVSTFNYIIPHLMGWSTFVSSIKPEESRPYSRPQSTSEYEWRR.

The N-terminal 37 residues, methionine 1–valine 37, are a transit peptide targeting the chloroplast. A disordered region spans residues serine 53 to alanine 81. The interval lysine 94–leucine 99 is required for ssDNA binding. The short motif at lysine 172 to lysine 185 is the Nuclear localization signal element.

It belongs to the Whirly family. As to quaternary structure, homotetramer.

It localises to the plastid. The protein localises to the chloroplast stroma. It is found in the nucleus. In terms of biological role, single-stranded DNA and RNA binding protein that maintains plastid genome stability by preventing break-induced and short homology-dependent illegitimate recombinations. Functions in RNA metabolism and is involved in the maturation of the atpF and 23S ribosomal RNAs. The protein is Single-stranded DNA-binding protein WHY1, chloroplastic (WHY1) of Zea mays (Maize).